The primary structure comprises 137 residues: MLLPLALLLGGCVSQPAPMSPKVTVGGSVGGVSLQARQAQLRLRLYAVVQGRMQTIAERRYRVSGLPLRYAFDLEVDRLEGEALYLRTELSWVGVAAVQASAWQQVAAGVDERVRLVRRDCFPNCTAARPEERSGND.

Residues 1–14 (MLLPLALLLGGCVS) form the signal peptide.

The protein belongs to the ExsB/YscW family.

It is found in the cell outer membrane. Functionally, involved in the synthesis of the type III secretion system (T3SS), also called injectisome, which is used to inject bacterial effector proteins into eukaryotic host cells. Pilot protein that is required for the proper localization of the secretin PscC in the outer membrane. Necessary for full in vivo virulence. This chain is Type 3 secretion system pilotin, found in Pseudomonas aeruginosa (strain ATCC 15692 / DSM 22644 / CIP 104116 / JCM 14847 / LMG 12228 / 1C / PRS 101 / PAO1).